Here is a 631-residue protein sequence, read N- to C-terminus: DNA ligase (631 aa).

NAD(+)-binding positions include 37–41 and 79–80; these read DAHYD and ST. Lys-115 acts as the N6-AMP-lysine intermediate in catalysis. Residues Arg-131, Glu-160, and Lys-272 each contribute to the NAD(+) site. Zn(2+) is bound by residues Cys-361, Cys-364, Cys-377, and Cys-382. The BRCT domain maps to 539 to 630; the sequence is DVSSPISGKG…SQSSPEQMSL (92 aa).

This sequence belongs to the NAD-dependent DNA ligase family. LigA subfamily. Mg(2+) serves as cofactor. It depends on Mn(2+) as a cofactor.

The catalysed reaction is NAD(+) + (deoxyribonucleotide)n-3'-hydroxyl + 5'-phospho-(deoxyribonucleotide)m = (deoxyribonucleotide)n+m + AMP + beta-nicotinamide D-nucleotide.. Its function is as follows. DNA ligase that catalyzes the formation of phosphodiester linkages between 5'-phosphoryl and 3'-hydroxyl groups in double-stranded DNA using NAD as a coenzyme and as the energy source for the reaction. It is essential for DNA replication and repair of damaged DNA. This chain is DNA ligase, found in Desulfatibacillum aliphaticivorans.